The primary structure comprises 264 residues: Transcription initiation factor TFIID subunit 9 (264 aa).

At Lys-5 the chain carries N6-acetyllysine. 4 positions are modified to phosphoserine: Ser-149, Ser-152, Ser-155, and Ser-158. The segment at 150 to 174 (VGSVSSRPSTPTLGTPTPQAMSVST) is disordered. Over residues 151–174 (GSVSSRPSTPTLGTPTPQAMSVST) the composition is skewed to polar residues. Thr-159, Thr-161, Thr-164, and Thr-178 each carry phosphothreonine. 2 positions are modified to phosphoserine: Ser-181 and Ser-196. The segment at 233–264 (QNTANESANALKRKREEEDDDDDDDDDDYDNL) is disordered. The span at 249–264 (EEDDDDDDDDDDYDNL) shows a compositional bias: acidic residues.

The protein belongs to the TAF9 family. Component of the TFIID basal transcription factor complex, composed of TATA-box-binding protein TBP, and a number of TBP-associated factors (TAFs), including TAF1, TAF2, TAF3, TAF4, TAF5, TAF6, TAF7, TAF8, TAF9, TAF10, TAF11, TAF12 and TAF13. Component of the TATA-binding protein-free TAF complex (TFTC), the PCAF histone acetylase complex and the STAGA transcription coactivator-HAT complex. The PCAF complex consists at least of TADA2L/ADA2, SUPT3H/SPT3, TADA3L/ADA3, TAF5L/PAF65-beta, TAF6L/PAF65-alpha, TAF10/TAFII30, TAF12/TAFII20, TAF9/TAFII31 and TRRAP. The STAGA transcription coactivator-HAT complex consists at least of SUPT3H, GCN5L2, SUPT7L, TAF5L, TAF6L, TADA3L, TAD1L, TAF10, TAF12, TRRAP and TAF9. Binds N-terminal domain of p53/TP53 which is essential for transcription. Component of some MLL1/MLL complex, at least composed of the core components KMT2A/MLL1, ASH2L, HCFC1/HCF1, WDR5 and RBBP5, as well as the facultative components BACC1, CHD8, E2F6, HSP70, INO80C, KANSL1, LAS1L, MAX, MCRS1, MGA, MYST1/MOF, PELP1, PHF20, PRP31, RING2, RUVB1/TIP49A, RUVB2/TIP49B, SENP3, TAF1, TAF4, TAF6, TAF7, TAF9 and TEX10. Binds TFIIB and the Herpes simplex virus activator VP16. Forms a heterodimer with TAF6 in a complex with the TAF4B-TAF12 heterodimer. Also interacts with TAF5. Binds directly DNA. Increased DNA binding when complexed with TAF6.

The protein localises to the nucleus. Functionally, the TFIID basal transcription factor complex plays a major role in the initiation of RNA polymerase II (Pol II)-dependent transcription. TFIID recognizes and binds promoters with or without a TATA box via its subunit TBP, a TATA-box-binding protein, and promotes assembly of the pre-initiation complex (PIC). The TFIID complex consists of TBP and TBP-associated factors (TAFs), including TAF1, TAF2, TAF3, TAF4, TAF5, TAF6, TAF7, TAF8, TAF9, TAF10, TAF11, TAF12 and TAF13. TAF9 is also a component of the TBP-free TAFII complex (TFTC), the PCAF histone acetylase complex and the STAGA transcription coactivator-HAT complex. TAF9 and its paralog TAF9B are involved in transcriptional activation as well as repression of distinct but overlapping sets of genes. Essential for cell viability. May have a role in gene regulation associated with apoptosis. The chain is Transcription initiation factor TFIID subunit 9 from Rattus norvegicus (Rat).